A 529-amino-acid polypeptide reads, in one-letter code: Cytochrome P450 monooxygenase ausG (529 aa).

Residues 31 to 51 (FLVTCGLPWLLLLFSVTIILF) form a helical membrane-spanning segment. Residue C470 participates in heme binding.

Belongs to the cytochrome P450 family. Heme serves as cofactor.

It is found in the membrane. Its pathway is secondary metabolite biosynthesis; terpenoid biosynthesis. Functionally, cytochrome P450 monooxygenase; part of the gene cluster B that mediates the biosynthesis of austinol and dehydroaustinol, two fungal meroterpenoids. The first step of the pathway is the synthesis of 3,5-dimethylorsellinic acid by the polyketide synthase ausA. 3,5-dimethylorsellinic acid is then prenylated by the polyprenyl transferase ausN. Further epoxidation by the FAD-dependent monooxygenase ausM and cyclization by the probable terpene cyclase ausL lead to the formation of protoaustinoid A. Protoaustinoid A is then oxidized to spiro-lactone preaustinoid A3 by the combined action of the FAD-binding monooxygenases ausB and ausC, and the dioxygenase ausE. Acid-catalyzed keto-rearrangement and ring contraction of the tetraketide portion of preaustinoid A3 by ausJ lead to the formation of preaustinoid A4. The aldo-keto reductase ausK, with the help of ausH, is involved in the next step by transforming preaustinoid A4 into isoaustinone which is in turn hydroxylated by the P450 monooxygenase ausI to form austinolide. Finally, the cytochrome P450 monooxygenase ausG modifies austinolide to austinol. Austinol can be further modified to dehydroaustinol which forms a diffusible complex with diorcinol that initiates conidiation. Due to genetic rearrangements of the clusters and the subsequent loss of some enzymes, the end products of the Emericella nidulans austinoid biosynthesis clusters are austinol and dehydroaustinol, even if additional enzymes, such as the O-acetyltransferase ausQ and the cytochrome P450 monooxygenase ausR are still functional. The chain is Cytochrome P450 monooxygenase ausG from Emericella nidulans (strain FGSC A4 / ATCC 38163 / CBS 112.46 / NRRL 194 / M139) (Aspergillus nidulans).